The sequence spans 252 residues: Hydroxyacylglutathione hydrolase (252 aa).

His54, His56, Asp58, His59, His111, Asp128, and His166 together coordinate Zn(2+).

This sequence belongs to the metallo-beta-lactamase superfamily. Glyoxalase II family. In terms of assembly, monomer. Requires Zn(2+) as cofactor.

The enzyme catalyses an S-(2-hydroxyacyl)glutathione + H2O = a 2-hydroxy carboxylate + glutathione + H(+). The protein operates within secondary metabolite metabolism; methylglyoxal degradation; (R)-lactate from methylglyoxal: step 2/2. Functionally, thiolesterase that catalyzes the hydrolysis of S-D-lactoyl-glutathione to form glutathione and D-lactic acid. In Vibrio parahaemolyticus serotype O3:K6 (strain RIMD 2210633), this protein is Hydroxyacylglutathione hydrolase.